Here is a 165-residue protein sequence, read N- to C-terminus: uncharacterized protein (165 aa).

Residues 7–29 (YPLIFTAFLLIAFCLIFFSYHLI) form a helical membrane-spanning segment.

It is found in the membrane. This is an uncharacterized protein from Bacillus subtilis (strain 168).